A 118-amino-acid polypeptide reads, in one-letter code: Putative pterin-4-alpha-carbinolamine dehydratase (118 aa).

It belongs to the pterin-4-alpha-carbinolamine dehydratase family.

It carries out the reaction (4aS,6R)-4a-hydroxy-L-erythro-5,6,7,8-tetrahydrobiopterin = (6R)-L-erythro-6,7-dihydrobiopterin + H2O. In Xanthomonas axonopodis pv. citri (strain 306), this protein is Putative pterin-4-alpha-carbinolamine dehydratase (phhB).